Consider the following 197-residue polypeptide: MGIRHELDILLVSENLALKNVELLKGDSYGCTINIKVNQQKKLDFIIILRPDWTEVRNVKKINMVCNGVVIDTTLIKKSFYEEVYSSSVTVFQNTTVEFFSDTSKKYKEEYPIVNINTIKRYYEIKDSRMTCINFESPISDYDQVNYLKDYINISDDYYLYDACDDCIISSDHDDNDNADDDEEDDDEVNDIEDDYE.

Positions 172–197 (DHDDNDNADDDEEDDDEVNDIEDDYE) are disordered. The segment covering 174 to 197 (DDNDNADDDEEDDDEVNDIEDDYE) has biased composition (acidic residues).

Belongs to the poxviridae C7 protein family.

The polypeptide is Probable host range protein 2 (Ovis aries (Sheep)).